Reading from the N-terminus, the 123-residue chain is UPF0738 protein Bcer98_0913 (123 aa).

The protein belongs to the UPF0738 family.

The chain is UPF0738 protein Bcer98_0913 from Bacillus cytotoxicus (strain DSM 22905 / CIP 110041 / 391-98 / NVH 391-98).